The chain runs to 423 residues: COP9 signalosome complex subunit 3 (423 aa).

Residues 197 to 365 (NFERALYFYE…GMVCFHDNPE (169 aa)) enclose the PCI domain. A disordered region spans residues 403 to 423 (FVQKSMGSQDDDSGSKPSSYS).

It belongs to the CSN3 family. Component of the CSN complex, probably composed of cops1, cops2, cops3, cops4, cops5, cops6, cops7, cops8 and cops9.

Its subcellular location is the cytoplasm. It is found in the nucleus. Its function is as follows. Component of the COP9 signalosome complex (CSN), a complex involved in various cellular and developmental processes. The CSN complex is an essential regulator of the ubiquitin (Ubl) conjugation pathway by mediating the deneddylation of the cullin subunits of E3 ligase complexes, leading to modify the Ubl ligase activity. This is COP9 signalosome complex subunit 3 (cops3) from Xenopus tropicalis (Western clawed frog).